A 388-amino-acid chain; its full sequence is Succinate--CoA ligase [ADP-forming] subunit beta (388 aa).

The 236-residue stretch at 9–244 (KQLFAEYGLP…PSQDDAREAH (236 aa)) folds into the ATP-grasp domain. Residues Lys-46, 53-55 (GRG), Glu-99, Thr-102, and Glu-107 contribute to the ATP site. Mg(2+) is bound by residues Asn-199 and Asp-213. Residues Asn-264 and 321 to 323 (GIV) contribute to the substrate site.

The protein belongs to the succinate/malate CoA ligase beta subunit family. Heterotetramer of two alpha and two beta subunits. Mg(2+) is required as a cofactor.

The catalysed reaction is succinate + ATP + CoA = succinyl-CoA + ADP + phosphate. The enzyme catalyses GTP + succinate + CoA = succinyl-CoA + GDP + phosphate. The protein operates within carbohydrate metabolism; tricarboxylic acid cycle; succinate from succinyl-CoA (ligase route): step 1/1. Succinyl-CoA synthetase functions in the citric acid cycle (TCA), coupling the hydrolysis of succinyl-CoA to the synthesis of either ATP or GTP and thus represents the only step of substrate-level phosphorylation in the TCA. The beta subunit provides nucleotide specificity of the enzyme and binds the substrate succinate, while the binding sites for coenzyme A and phosphate are found in the alpha subunit. This chain is Succinate--CoA ligase [ADP-forming] subunit beta, found in Pseudomonas aeruginosa (strain UCBPP-PA14).